A 352-amino-acid chain; its full sequence is Carbohydrate sulfotransferase 11 (352 aa).

Over 1 to 16 (MKPALLEVMRMNRICR) the chain is Cytoplasmic. The helical; Signal-anchor for type II membrane protein transmembrane segment at 17-37 (MVLATCFGSFILVIFYFQSML) threads the bilayer. At 38 to 352 (HPVMRRNPFG…YSVPNYLKLD (315 aa)) the chain is on the lumenal side. Residues 124–130 (PKVACTN) and 186–194 (REPFERLVS) contribute to the 3'-phosphoadenylyl sulfate site. N-linked (GlcNAc...) asparagine glycans are attached at residues Asn205, Asn223, Asn321, and Asn342.

Belongs to the sulfotransferase 2 family. In terms of processing, N-glycosylated; required for activity and stability. As to expression, predominantly expressed in brain and kidney. Also expressed at weaker level in heart, spleen and lung. Expressed in developing chondrocytes.

The protein resides in the golgi apparatus membrane. It catalyses the reaction chondroitin beta-D-glucuronate + n 3'-phosphoadenylyl sulfate = chondroitin 4'-sulfate + n adenosine 3',5'-bisphosphate + n H(+). Functionally, catalyzes the transfer of sulfate to position 4 of the N-acetylgalactosamine (GalNAc) residue of chondroitin. Chondroitin sulfate constitutes the predominant proteoglycan present in cartilage and is distributed on the surfaces of many cells and extracellular matrices. Can also sulfate Gal residues in desulfated dermatan sulfate. Preferentially sulfates in GlcA-&gt;GalNAc unit than in IdoA-&gt;GalNAc unit. Does not form 4, 6-di-O-sulfated GalNAc when chondroitin sulfate C is used as an acceptor. This Mus musculus (Mouse) protein is Carbohydrate sulfotransferase 11 (Chst11).